The following is a 334-amino-acid chain: Protein NlpD/LppB homolog (334 aa).

The LysM domain occupies 89–133 (IFYIVKSKDTMYSIAKNSGYNYHELSKFNSIKKPYKIIIGQKIWM).

The protein belongs to the E.coli NlpD/Haemophilus LppB family.

In Buchnera aphidicola subsp. Acyrthosiphon pisum (strain APS) (Acyrthosiphon pisum symbiotic bacterium), this protein is Protein NlpD/LppB homolog.